A 79-amino-acid polypeptide reads, in one-letter code: Exodeoxyribonuclease 7 small subunit (79 aa).

The protein belongs to the XseB family. In terms of assembly, heterooligomer composed of large and small subunits.

The protein localises to the cytoplasm. It catalyses the reaction Exonucleolytic cleavage in either 5'- to 3'- or 3'- to 5'-direction to yield nucleoside 5'-phosphates.. Its function is as follows. Bidirectionally degrades single-stranded DNA into large acid-insoluble oligonucleotides, which are then degraded further into small acid-soluble oligonucleotides. This chain is Exodeoxyribonuclease 7 small subunit, found in Lactococcus lactis subsp. lactis (strain IL1403) (Streptococcus lactis).